A 307-amino-acid polypeptide reads, in one-letter code: Putative gluconeogenesis factor (307 aa).

Belongs to the gluconeogenesis factor family.

The protein resides in the cytoplasm. Functionally, required for morphogenesis under gluconeogenic growth conditions. In Yersinia pestis, this protein is Putative gluconeogenesis factor.